We begin with the raw amino-acid sequence, 611 residues long: Conglutin beta 1 (611 aa).

The signal sequence occupies residues 1–30 (MAKMRVRLPMLILLLGVVFLLAASIGIAYG). 2 stretches are compositionally biased toward basic and acidic residues: residues 32–82 (KDFT…RSQS) and 130–141 (SRREEREEREQE). Disordered stretches follow at residues 32 to 194 (KDFT…NRFQ) and 384 to 407 (LRKH…NLRS). Residues 142-151 (QGSSSGSQRG) are compositionally biased toward low complexity. Residues 152-181 (SGDERRQHRERRVHREEREQEQDSRSDSRR) are compositionally biased toward basic and acidic residues. Residues 186-344 (YHFSSNRFQT…TFNTRYEEIE (159 aa)) form the Cupin type-1 1 domain. The segment covering 390-402 (SSSGEGKPSESGP) has biased composition (low complexity). In terms of domain architecture, Cupin type-1 2 spans 403 to 569 (FNLRSNKPIY…TFPGSIEDVE (167 aa)). Asn434 carries an N-linked (GlcNAc...) asparagine glycan. The segment at 476–495 (DQQRQQDEQEEEYEQGEEEV) is disordered. Acidic residues predominate over residues 483-492 (EQEEEYEQGE). Residue Asn519 is glycosylated (N-linked (GlcNAc...) asparagine). Over residues 580 to 589 (FANAQPQQQQ) the composition is skewed to low complexity. The interval 580–600 (FANAQPQQQQQREKEGRRGRR) is disordered.

It belongs to the 7S seed storage protein family. Component of globulins complexes which accumulate in seeds.

Its function is as follows. Seed storage protein. Accumulates during seed development and is hydrolyzed after germination to provide a carbon and nitrogen source for the developing seedling. The protein is Conglutin beta 1 of Lupinus angustifolius (Narrow-leaved blue lupine).